A 126-amino-acid chain; its full sequence is Ribulose bisphosphate carboxylase small subunit, chloroplastic 1 (126 aa).

The protein belongs to the RuBisCO small chain family. Heterohexadecamer of 8 large and 8 small subunits.

The protein localises to the plastid. It localises to the chloroplast. Functionally, ruBisCO catalyzes two reactions: the carboxylation of D-ribulose 1,5-bisphosphate, the primary event in carbon dioxide fixation, as well as the oxidative fragmentation of the pentose substrate. Both reactions occur simultaneously and in competition at the same active site. Although the small subunit is not catalytic it is essential for maximal activity. The protein is Ribulose bisphosphate carboxylase small subunit, chloroplastic 1 of Acetabularia peniculus (Green alga).